A 76-amino-acid polypeptide reads, in one-letter code: MTMIRMTRMGRKKKPFYRIVVTDSRKRRDGGWIEAIGHYNPVSENKELTLDEERLNYWLSVGAQMSPTVKRLAGKK.

Belongs to the bacterial ribosomal protein bS16 family.

This Sulfurovum sp. (strain NBC37-1) protein is Small ribosomal subunit protein bS16.